A 380-amino-acid chain; its full sequence is Succinyl-diaminopimelate desuccinylase (380 aa).

Residue His70 coordinates Zn(2+). Asp72 is a catalytic residue. Zn(2+) is bound at residue Asp103. Glu137 serves as the catalytic Proton acceptor. Zn(2+) is bound by residues Glu138, Glu166, and His352.

The protein belongs to the peptidase M20A family. DapE subfamily. In terms of assembly, homodimer. It depends on Zn(2+) as a cofactor. Co(2+) is required as a cofactor.

The enzyme catalyses N-succinyl-(2S,6S)-2,6-diaminopimelate + H2O = (2S,6S)-2,6-diaminopimelate + succinate. The protein operates within amino-acid biosynthesis; L-lysine biosynthesis via DAP pathway; LL-2,6-diaminopimelate from (S)-tetrahydrodipicolinate (succinylase route): step 3/3. Catalyzes the hydrolysis of N-succinyl-L,L-diaminopimelic acid (SDAP), forming succinate and LL-2,6-diaminopimelate (DAP), an intermediate involved in the bacterial biosynthesis of lysine and meso-diaminopimelic acid, an essential component of bacterial cell walls. The sequence is that of Succinyl-diaminopimelate desuccinylase from Azoarcus sp. (strain BH72).